The sequence spans 390 residues: uncharacterized protein (390 aa).

Helical transmembrane passes span 27–47 (GGLI…MEWI) and 356–376 (FGGF…LASF).

Belongs to the ERGIC family.

The protein localises to the membrane. This is an uncharacterized protein from Schizosaccharomyces pombe (strain 972 / ATCC 24843) (Fission yeast).